Here is a 417-residue protein sequence, read N- to C-terminus: Probable diacetyl reductase [(R)-acetoin forming] 2 (417 aa).

Cysteine 39 is a binding site for Zn(2+). At serine 63 the chain carries Phosphoserine. Residues histidine 64, cysteine 120, cysteine 123, cysteine 131, and glutamine 173 each coordinate Zn(2+). The segment at 380-417 (GELNREADNEKKEISELSSRKDQERLRESINEAKLRHT) is disordered. Positions 381–417 (ELNREADNEKKEISELSSRKDQERLRESINEAKLRHT) are enriched in basic and acidic residues.

This sequence belongs to the zinc-containing alcohol dehydrogenase family. It depends on Zn(2+) as a cofactor.

The protein localises to the cytoplasm. Its subcellular location is the nucleus. The catalysed reaction is (R)-acetoin + NAD(+) = diacetyl + NADH + H(+). Its function is as follows. Catalyzes the irreversible reduction of 2,3-butanediol to (S)-acetoin in the presence of NADH. In Saccharomyces cerevisiae (strain ATCC 204508 / S288c) (Baker's yeast), this protein is Probable diacetyl reductase [(R)-acetoin forming] 2 (BDH2).